The chain runs to 775 residues: K(+)-insensitive pyrophosphate-energized proton pump (775 aa).

Helical transmembrane passes span 9-29 (SLAV…AFFI), 65-85 (ISIL…IIPP), 108-128 (AVAF…GMNV), 160-180 (MLTV…FGIA), and 185-205 (LLGF…GGGI). Lys-208 contributes to the substrate binding site. Residues Asp-211, Asp-215, and Asp-241 each contribute to the Mg(2+) site. Helical transmembrane passes span 259 to 279 (VTLV…VGTI), 288 to 308 (FIIF…IGNL), 327 to 347 (FYIA…VFMV), 359 to 379 (FFAT…TEYF), 413 to 433 (SVWA…IYAG), and 442 to 462 (AILY…GNTI). Mg(2+) is bound at residue Asp-472. A run of 4 helical transmembrane segments spans residues 508–528 (IAIG…FTDV), 555–575 (PVFI…ALTI), 622–642 (LISL…TLGV), and 644–664 (ALGG…VFQA). Asp-671, Asp-697, and Asp-701 together coordinate Ca(2+). Lys-704 serves as a coordination point for substrate. The next 2 helical transmembrane spans lie at 710–730 (ALNP…PIVV) and 735–755 (GSPG…WAIW).

This sequence belongs to the H(+)-translocating pyrophosphatase (TC 3.A.10) family. K(+)-insensitive subfamily. In terms of assembly, homodimer. Requires Mg(2+) as cofactor.

The protein localises to the cell membrane. It catalyses the reaction diphosphate + H2O + H(+)(in) = 2 phosphate + 2 H(+)(out). Proton pump that utilizes the energy of pyrophosphate hydrolysis as the driving force for proton movement across the membrane. Generates a proton motive force. In Chloroflexus aurantiacus (strain ATCC 29366 / DSM 635 / J-10-fl), this protein is K(+)-insensitive pyrophosphate-energized proton pump.